Consider the following 708-residue polypeptide: Wall-associated receptor kinase-like 14 (708 aa).

The first 42 residues, 1-42 (MLRSIFDFNQRSTKMVMISHKLDLILVFIIVIGGSIFRRVSA), serve as a signal peptide directing secretion. N43, N88, N101, N131, N158, N167, and N184 each carry an N-linked (GlcNAc...) asparagine glycan. Residues 43–285 (NFTVPCNGRC…WRHCRSNLIT (243 aa)) are Extracellular-facing. Residues 286–306 (IVGGTVGGAFLLAALAFFFFC) form a helical membrane-spanning segment. Residues 307–708 (KRRRSTPLRS…TNTLLGNIPR (402 aa)) are Cytoplasmic-facing. Positions 348–629 (FSEKQKLGIG…LEQIRLSGWI (282 aa)) constitute a Protein kinase domain. ATP-binding positions include 354 to 362 (LGIGAYGTV) and K376. Residue D472 is the Proton acceptor of the active site. Disordered stretches follow at residues 636-659 (SPAG…SIGS) and 686-708 (VQDP…NIPR). The span at 643 to 652 (SSDRGSERSV) shows a compositional bias: basic and acidic residues. The segment covering 692 to 708 (SAQSSPSTNTLLGNIPR) has biased composition (polar residues).

It belongs to the protein kinase superfamily. Ser/Thr protein kinase family.

The protein resides in the membrane. The catalysed reaction is L-seryl-[protein] + ATP = O-phospho-L-seryl-[protein] + ADP + H(+). It catalyses the reaction L-threonyl-[protein] + ATP = O-phospho-L-threonyl-[protein] + ADP + H(+). Functionally, serine/threonine-protein kinase that may function as a signaling receptor of extracellular matrix component. The protein is Wall-associated receptor kinase-like 14 (WAKL14) of Arabidopsis thaliana (Mouse-ear cress).